The sequence spans 502 residues: ATP synthase subunit alpha (502 aa).

169–176 (GDRQTGKT) contributes to the ATP binding site.

Belongs to the ATPase alpha/beta chains family. F-type ATPases have 2 components, CF(1) - the catalytic core - and CF(0) - the membrane proton channel. CF(1) has five subunits: alpha(3), beta(3), gamma(1), delta(1), epsilon(1). CF(0) has three main subunits: a(1), b(2) and c(9-12). The alpha and beta chains form an alternating ring which encloses part of the gamma chain. CF(1) is attached to CF(0) by a central stalk formed by the gamma and epsilon chains, while a peripheral stalk is formed by the delta and b chains. The F(1)F(0) complex interacts with SpoIIIJ and YqjG; YqgA is found in the same complex.

The protein localises to the cell membrane. It localises to the membrane raft. It carries out the reaction ATP + H2O + 4 H(+)(in) = ADP + phosphate + 5 H(+)(out). In terms of biological role, produces ATP from ADP in the presence of a proton gradient across the membrane. The alpha chain is a regulatory subunit. This Bacillus subtilis (strain 168) protein is ATP synthase subunit alpha.